Reading from the N-terminus, the 449-residue chain is Sulfite exporter TauE/SafE family protein 5 (449 aa).

12 consecutive transmembrane segments (helical) span residues 1-21 (MKTLFVLFLLLLCVFAINANQ), 57-77 (AIIMAGVLCFLAALISSAGGI), 78-98 (GGGGLFIPIMTIVAGVDLKTA), 101-121 (FSAFMVTGGSIANVISNLFGG), 127-147 (YDLALLLEPCMLLGVSIGVIC), 150-170 (VLPEWLITVLFAVFLAWSSLK), 224-244 (IPWTKLGVLVIVWASFFVIYL), 259-279 (PCGVEYWILLSLQIPLALIFT), 315-335 (AMSFLAGLLGGIFGIGGGMLI), 353-373 (TSFMVFFSATMSAVQYLLLGM), 378-398 (TAYVFSFICFLASLLGLVLVQ), and 409-429 (IIVFSVGTVMSLSTVLMTSFG).

It belongs to the 4-toluene sulfonate uptake permease (TSUP) (TC 2.A.102) family.

The protein localises to the membrane. The sequence is that of Sulfite exporter TauE/SafE family protein 5 from Arabidopsis thaliana (Mouse-ear cress).